A 236-amino-acid polypeptide reads, in one-letter code: Leucyl/phenylalanyl-tRNA--protein transferase (236 aa).

The protein belongs to the L/F-transferase family.

It is found in the cytoplasm. The enzyme catalyses N-terminal L-lysyl-[protein] + L-leucyl-tRNA(Leu) = N-terminal L-leucyl-L-lysyl-[protein] + tRNA(Leu) + H(+). The catalysed reaction is N-terminal L-arginyl-[protein] + L-leucyl-tRNA(Leu) = N-terminal L-leucyl-L-arginyl-[protein] + tRNA(Leu) + H(+). It catalyses the reaction L-phenylalanyl-tRNA(Phe) + an N-terminal L-alpha-aminoacyl-[protein] = an N-terminal L-phenylalanyl-L-alpha-aminoacyl-[protein] + tRNA(Phe). In terms of biological role, functions in the N-end rule pathway of protein degradation where it conjugates Leu, Phe and, less efficiently, Met from aminoacyl-tRNAs to the N-termini of proteins containing an N-terminal arginine or lysine. The polypeptide is Leucyl/phenylalanyl-tRNA--protein transferase (Shewanella pealeana (strain ATCC 700345 / ANG-SQ1)).